Here is a 352-residue protein sequence, read N- to C-terminus: Selenide, water dikinase (352 aa).

Cys23 is a catalytic residue. ATP-binding positions include Lys26 and 54-56 (SRD). Mg(2+) is bound at residue Asp57. Residues Asp74, Asp97, and 145–147 (GHS) contribute to the ATP site. Asp97 serves as a coordination point for Mg(2+). Asp233 serves as a coordination point for Mg(2+).

Belongs to the selenophosphate synthase 1 family. Class I subfamily. Homodimer. Requires Mg(2+) as cofactor.

It catalyses the reaction hydrogenselenide + ATP + H2O = selenophosphate + AMP + phosphate + 2 H(+). Synthesizes selenophosphate from selenide and ATP. The protein is Selenide, water dikinase of Shewanella baltica (strain OS185).